Consider the following 571-residue polypeptide: MNIQKFLKKKIKKICIKLGLPENFNPIIQKNIKKKNIDYQINGIIKLKKKKSNYHYKLAKKISYYMNKSKIYKKISISKPGFINITLDSNWICTNINNMFIAKNFNISFKKPKKIIIDYSSPNIAKEMHVGHLRSTILGDTTARILKFLGHNVIKQNHIGDWGIQFGMLITQLKLESKISFKNIEKIYKKSYLNYKKNPIFFKKTKKNVVKLQKKDKKCIYIWKKIVKKSIKKNNKVYKKLNVSLKKKDIRGESFYNFMLPGIISDLKKKKIAVNYQGCVIVYLKNFKNRLGKKMGVVIQKKDGAFLYTTTDIACLKYRCKTLKADRIIYYIDNRQKQHLLQIWNIAKKAKYFTKKILLEHHSFGMILHKNKKPFKTRNGDTIKLIKLLNKGVTKAKEKIKKKNRKIKKKELKKIAHNIGIGAIKYFDLSKKRKLDYIFDWDKMLSLEGNTAPYIQYAYIRIKSIIKKNTTIFQNDKYKINIFTSFERQLIFSIFQFEEIIHILEKKGTPHLMCNYLYDLSGKFSKFYENCSILNAKEKHIKISRIKLSILTSKIIKKCLYFLGIKTVSKM.

The 'HIGH' region signature appears at 122–132 (PNIAKEMHVGH).

Belongs to the class-I aminoacyl-tRNA synthetase family. As to quaternary structure, monomer.

The protein resides in the cytoplasm. It carries out the reaction tRNA(Arg) + L-arginine + ATP = L-arginyl-tRNA(Arg) + AMP + diphosphate. The protein is Arginine--tRNA ligase of Buchnera aphidicola subsp. Cinara cedri (strain Cc).